The primary structure comprises 370 residues: NSFL1 cofactor p47 (370 aa).

A disordered region spans residues 54–73 (SQATPSSVSRGTAPSDNRVT). Serine 74, serine 102, and serine 114 each carry phosphoserine. Disordered stretches follow at residues 80–116 (HDQDEEEEEEEGQRFYAGGSERSGQQIVGPPRKKSPN) and 138–157 (TKSPGETSKPRPFAGGGYRL). The Nuclear localization signal motif lies at 109–115 (PPRKKSP). Phosphoserine; by CDK1 is present on serine 140. At tyrosine 167 the chain carries Phosphotyrosine. The short motif at 172 to 175 (RRRH) is the Nuclear localization signal element. Phosphoserine is present on residues serine 176, serine 192, and serine 272. Residues 179-244 (DVHVVLKLWK…MEDHRDEDFV (66 aa)) form the SEP domain. Positions 291-368 (EAEPTTNIQI…NLLNAVIVQR (78 aa)) constitute a UBX domain.

It belongs to the NSFL1C family. As to quaternary structure, part of a ternary complex containing STX5A, NSFL1C and VCP. NSFL1C forms a homotrimer that binds to one end of a VCP homohexamer. The complex binds to membranes enriched in phosphatidylethanolamine-containing lipids and promotes Golgi membrane fusion. Interaction with VCIP135 leads to dissociation of the complex via ATP hydrolysis by VCP. Binds ubiquitin and mono-ubiquitinated proteins via its N-terminal UBA-like domain when bound to VCP. Post-translationally, phosphorylated during mitosis. Phosphorylation inhibits interaction with Golgi membranes and is required for the fragmentation of the Golgi stacks during mitosis. In terms of tissue distribution, highly expressed in heart, brain, spleen, lung, liver, muscle, kidney and testis.

It localises to the nucleus. The protein resides in the golgi apparatus. Its subcellular location is the golgi stack. The protein localises to the chromosome. It is found in the cytoplasm. It localises to the cytoskeleton. The protein resides in the microtubule organizing center. Its subcellular location is the centrosome. Reduces the ATPase activity of VCP. Necessary for the fragmentation of Golgi stacks during mitosis and for VCP-mediated reassembly of Golgi stacks after mitosis. May play a role in VCP-mediated formation of transitional endoplasmic reticulum (tER). Inhibits the activity of CTSL (in vitro). Together with UBXN2B/p37, regulates the centrosomal levels of kinase AURKA/Aurora A during mitotic progression by promoting AURKA removal from centrosomes in prophase. Also, regulates spindle orientation during mitosis. The polypeptide is NSFL1 cofactor p47 (Nsfl1c) (Rattus norvegicus (Rat)).